The chain runs to 41 residues: uncharacterized protein (41 aa).

This is an uncharacterized protein from Bacillus subtilis (strain 168).